The sequence spans 563 residues: Membrane protein insertase YidC (563 aa).

A helical membrane pass occupies residues 6–26 (TILWMIFSFSLLLLWNNWQIH). Residues 36–68 (PPASSAASPAEGQQAAANGQAATPSVPTTPAAA) form a disordered region. The next 4 helical transmembrane spans lie at 373 to 393 (WGWAIVALTVIIKAVFFPLAA), 443 to 463 (LPMVVQIPVFIALYWVLLASV), 482 to 502 (PYFILPAVMMATMFLQIKLNP), and 512 to 532 (VMMIMPLVFGGMMFFFPAGLV).

This sequence belongs to the OXA1/ALB3/YidC family. Type 1 subfamily. Interacts with the Sec translocase complex via SecD. Specifically interacts with transmembrane segments of nascent integral membrane proteins during membrane integration.

The protein resides in the cell inner membrane. In terms of biological role, required for the insertion and/or proper folding and/or complex formation of integral membrane proteins into the membrane. Involved in integration of membrane proteins that insert both dependently and independently of the Sec translocase complex, as well as at least some lipoproteins. Aids folding of multispanning membrane proteins. This chain is Membrane protein insertase YidC, found in Bordetella petrii (strain ATCC BAA-461 / DSM 12804 / CCUG 43448).